Reading from the N-terminus, the 32-residue chain is Cruzioseptin-9 (32 aa).

Gln-29 bears the Glutamine amide mark. A propeptide spanning residues 31–32 is cleaved from the precursor; it reads EQ.

As to expression, expressed by the skin glands.

The protein localises to the secreted. Has antimicrobial activity. The chain is Cruzioseptin-9 from Cruziohyla calcarifer (Splendid leaf frog).